The sequence spans 481 residues: UDP-N-acetylmuramoyl-L-alanyl-D-glutamate--L-lysine ligase (481 aa).

Ser-42 lines the UDP-N-acetyl-alpha-D-muramoyl-L-alanyl-D-glutamate pocket. Residue 118–124 (GTKGKTT) participates in ATP binding. UDP-N-acetyl-alpha-D-muramoyl-L-alanyl-D-glutamate-binding positions include 160–161 (TT), Ser-187, and Arg-195. Lys-229 is subject to N6-carboxylysine. The short motif at 404 to 407 (DDPN) is the L-lysine recognition motif element.

Belongs to the MurCDEF family. MurE subfamily. Post-translationally, carboxylation is probably crucial for Mg(2+) binding and, consequently, for the gamma-phosphate positioning of ATP.

The protein localises to the cytoplasm. It carries out the reaction UDP-N-acetyl-alpha-D-muramoyl-L-alanyl-D-glutamate + L-lysine + ATP = UDP-N-acetyl-alpha-D-muramoyl-L-alanyl-gamma-D-glutamyl-L-lysine + ADP + phosphate + H(+). The protein operates within cell wall biogenesis; peptidoglycan biosynthesis. In terms of biological role, catalyzes the addition of L-lysine to the nucleotide precursor UDP-N-acetylmuramoyl-L-alanyl-D-glutamate (UMAG) in the biosynthesis of bacterial cell-wall peptidoglycan. This chain is UDP-N-acetylmuramoyl-L-alanyl-D-glutamate--L-lysine ligase (murE), found in Streptococcus pneumoniae serotype 4 (strain ATCC BAA-334 / TIGR4).